The sequence spans 729 residues: Solute carrier family 15 member 2 (729 aa).

The segment at 1–34 is disordered; the sequence is MNPFQQNESKETLFSPVSTEETPPRLSSPAKKTP. Topologically, residues 1–57 are cytoplasmic; sequence MNPFQQNESKETLFSPVSTEETPPRLSSPAKKTPPKICGSNYPLSIAFIVVNEFCER. The residue at position 9 (serine 9) is a Phosphoserine. At threonine 12 the chain carries Phosphothreonine. At serine 28 the chain carries Phosphoserine. A helical membrane pass occupies residues 58-78; that stretch reads FSYYGMKAVLTLYFLYFLHWN. The Extracellular segment spans residues 79–87; the sequence is EDTSTSVYH. Residues 88–108 form a helical membrane-spanning segment; it reads AFSSLCYFTPILGAAIADSWL. The Cytoplasmic portion of the chain corresponds to 109–113; it reads GKFKT. The chain crosses the membrane as a helical span at residues 114–134; it reads IIYLSLVNVLGHVIKSLSAFP. Topologically, residues 135–139 are extracellular; it reads ILGGK. A helical transmembrane segment spans residues 140–160; that stretch reads VVHTVLSLVGLCLIALGTGGI. Residues 161–183 lie on the Cytoplasmic side of the membrane; sequence KPCVAAFGGDQFEEKHAEERTRY. A helical membrane pass occupies residues 184-204; that stretch reads FSGFYLAINAGSLISTFITPM. Residues 205-217 are Extracellular-facing; sequence LRGDVQCFGEDCY. The helical transmembrane segment at 218–238 threads the bilayer; the sequence is ALAFGVPGLLMVIALVVFAMG. The Cytoplasmic segment spans residues 239–295; that stretch reads SKMYKKPPPEGNIVAQVVKCIWFAISNRFKNRSEDIPKRQHWLDWAAEKYPKQLIMD. A helical membrane pass occupies residues 296 to 316; that stretch reads VKTLTRVLFLYIPLPMFWALL. Residues 317-343 are Extracellular-facing; the sequence is DQQGSRWTLQATKMNGNLGFFVLQPDQ. Residues 344–364 traverse the membrane as a helical segment; that stretch reads MQVLNPLLVLIFIPLFDLVIY. Residues 365 to 380 lie on the Cytoplasmic side of the membrane; sequence RLISKCGINFTSLRKM. A helical transmembrane segment spans residues 381-401; sequence AVGMVLACLAFAAAATVEIKI. The Extracellular portion of the chain corresponds to 402–611; it reads NEMAPPQPGS…PANKVSIAWQ (210 aa). The tract at residues 402 to 611 is extracellular domain (ECD); that stretch reads NEMAPPQPGS…PANKVSIAWQ (210 aa). N-linked (GlcNAc...) asparagine glycosylation is found at asparagine 435, asparagine 472, asparagine 508, asparagine 528, and asparagine 587. Residues 612–632 form a helical membrane-spanning segment; the sequence is LPQYALVTAGEVMFSVTGLEF. Residues 633–643 lie on the Cytoplasmic side of the membrane; that stretch reads SYSQAPSSMKS. A helical membrane pass occupies residues 644–664; the sequence is VLQAAWLLTVAIGNIIVLVVA. The Extracellular segment spans residues 665-674; the sequence is QFSGLVQWAE. A helical transmembrane segment spans residues 675–695; it reads FVLFSCLLLVVCLIFSIMGYY. At 696 to 729 the chain is on the cytoplasmic side; that stretch reads YIPIKSEDIQGPEDKQIPHMQGNMINLETKKTKL.

Belongs to the major facilitator superfamily. Proton-dependent oligopeptide transporter (POT/PTR) (TC 2.A.17) family. Interacts (via extracellular domain region) with trypsin. Strongly expressed in kidney. Also detected in brain, lung, liver and heart.

It localises to the apical cell membrane. The protein resides in the cytoplasmic vesicle. It is found in the phagosome membrane. Its subcellular location is the cell membrane. It catalyses the reaction a dipeptide(out) + 2 H(+)(out) = a dipeptide(in) + 2 H(+)(in). It carries out the reaction N-acetyl-D-muramoyl-L-alanyl-D-isoglutamine(out) + 3 H(+)(out) = N-acetyl-D-muramoyl-L-alanyl-D-isoglutamine(in) + 3 H(+)(in). The enzyme catalyses glycyl-L-leucine(out) + 2 H(+)(out) = glycyl-L-leucine(in) + 2 H(+)(in). The catalysed reaction is glycyl-L-lysine(out) + 2 H(+)(out) = glycyl-L-lysine(in) + 2 H(+)(in). It catalyses the reaction glycyl-L-glutamate(out) + 3 H(+)(out) = glycyl-L-glutamate(in) + 3 H(+)(in). It carries out the reaction L-alanyl-L-alanine(out) + 2 H(+)(out) = L-alanyl-L-alanine(in) + 2 H(+)(in). The enzyme catalyses an L-amino acid tripeptide(out) + 2 H(+)(out) = an L-amino acid tripeptide(in) + 2 H(+)(in). The catalysed reaction is carnosine(out) + 2 H(+)(out) = carnosine(in) + 2 H(+)(in). Functionally, proton-coupled amino-acid transporter that transports oligopeptides of 2 to 4 amino acids with a preference for dipeptides. Transports neutral and anionic dipeptides with a proton to peptide stoichiometry of 2:1 or 3:1. In kidney, involved in the absorption of circulating di- and tripeptides from the glomerular filtrate. Can also transport beta-lactam antibiotics, such as the aminocephalosporin cefadroxil, and other antiviral and anticancer drugs. Transports the dipeptide-like aminopeptidase inhibitor bestatin. Also able to transport carnosine. Involved in innate immunity by promoting the detection of microbial pathogens by NOD-like receptors (NLRs). Mediates transport of bacterial peptidoglycans across the plasma membrane or, in macrophages, the phagosome membrane: catalyzes the transport of certain bacterial peptidoglycans, such as muramyl dipeptide (MDP), the NOD2 ligand. This Oryctolagus cuniculus (Rabbit) protein is Solute carrier family 15 member 2.